Consider the following 115-residue polypeptide: Large ribosomal subunit protein bL19 (115 aa).

This sequence belongs to the bacterial ribosomal protein bL19 family.

Functionally, this protein is located at the 30S-50S ribosomal subunit interface and may play a role in the structure and function of the aminoacyl-tRNA binding site. The polypeptide is Large ribosomal subunit protein bL19 (Clostridium kluyveri (strain ATCC 8527 / DSM 555 / NBRC 12016 / NCIMB 10680 / K1)).